Reading from the N-terminus, the 305-residue chain is Peroxisome biogenesis factor 2 (305 aa).

Topologically, residues 1–15 (MASRKENAKSANRVL) are peroxisomal matrix. A helical membrane pass occupies residues 16-42 (RISQLDALELNKALEQLVWSQFTQCFH). Residues 43–48 (GFKPGL) are Cytoplasmic-facing. The helical transmembrane segment at 49–74 (LARFEPEVKACLWVFLWRFTIYSKNA) threads the bilayer. The Peroxisomal matrix segment spans residues 75 to 98 (TVGQSVLNIKYKNDFSPNLRYQPP). An N6-acetyllysine modification is found at Lys84. Residues 99–125 (SKNQKIWYAVCTIGGRWLEERCYDLFR) traverse the membrane as a helical segment. Residues 126–133 (NHHLASFG) lie on the Cytoplasmic side of the membrane. Residues 134–160 (KVKQCVNFVIGLLKLGGLINFLIFLQR) form a helical membrane-spanning segment. Residues 161–187 (GKFATLTERLLGIHSVFCKPQNICEVG) lie on the Peroxisomal matrix side of the membrane. A helical membrane pass occupies residues 188–211 (FEYMNRELLWHGFAEFLIFLLPLI). Topologically, residues 212–305 (NVQKLKAKLS…GIEMSEVNAL (94 aa)) are cytoplasmic. The Zn(2+) site is built by Cys244, Cys247, Cys259, His261, Cys264, Cys267, Cys280, and Cys283. The RING-type zinc-finger motif lies at 244–284 (CALCGEWPTMPHTIGCEHIFCYFCAKSSFLFDVYFTCPKCG).

Belongs to the pex2/pex10/pex12 family. In terms of assembly, component of the PEX2-PEX10-PEX12 retrotranslocation channel, composed of PEX2, PEX10 and PEX12. Forms intramolecular and intermolecular disulfide bonds in response to reactive oxygen species (ROS), promoting higher stability.

The protein resides in the peroxisome membrane. The enzyme catalyses [E2 ubiquitin-conjugating enzyme]-S-ubiquitinyl-L-cysteine + [acceptor protein]-L-cysteine = [E2 ubiquitin-conjugating enzyme]-L-cysteine + [acceptor protein]-S-ubiquitinyl-L-cysteine.. The catalysed reaction is S-ubiquitinyl-[E2 ubiquitin-conjugating enzyme]-L-cysteine + [acceptor protein]-L-lysine = [E2 ubiquitin-conjugating enzyme]-L-cysteine + N(6)-ubiquitinyl-[acceptor protein]-L-lysine.. It functions in the pathway protein modification; protein ubiquitination. Functionally, E3 ubiquitin-protein ligase component of a retrotranslocation channel required for peroxisome organization by mediating export of the PEX5 receptor from peroxisomes to the cytosol, thereby promoting PEX5 recycling. The retrotranslocation channel is composed of PEX2, PEX10 and PEX12; each subunit contributing transmembrane segments that coassemble into an open channel that specifically allows the passage of PEX5 through the peroxisomal membrane. PEX2 also regulates peroxisome organization by acting as a E3 ubiquitin-protein ligase. PEX2 ubiquitinates PEX5 during its passage through the retrotranslocation channel: catalyzes monoubiquitination of PEX5 at 'Cys-11', a modification that acts as a signal for PEX5 extraction into the cytosol. Required for pexophagy in response to starvation by mediating ubiquitination of peroxisomal proteins, such as PEX5 and ABCD3/PMP70. Also involved in the response to reactive oxygen species (ROS) by mediating 'Lys-48'-linked polyubiquitination and subsequent degradation of PNPLA2/ATGL, thereby regulating lipolysis. This chain is Peroxisome biogenesis factor 2, found in Homo sapiens (Human).